A 369-amino-acid polypeptide reads, in one-letter code: Secondary metabolism regulator laeA (369 aa).

The disordered stretch occupies residues Met-1–Asp-37. Residues Asp-20–Asp-37 show a composition bias toward low complexity.

The protein belongs to the methyltransferase superfamily. LaeA methyltransferase family. As to quaternary structure, component of the heterotrimeric velvet complex composed of laeA, veA and velB; VeA acting as a bridging protein between laeA and velB. Interacts directly with veA.

The protein localises to the nucleus. It carries out the reaction L-methionyl-[protein] + S-adenosyl-L-methionine = S-methyl-L-methionyl-[protein] + S-adenosyl-L-homocysteine. In terms of biological role, methyltransferase that performs automethylation. No other methyl-accepting substrate has been identified yet. Component of the velvet transcription factor complex that acts as a global regulator for secondary metabolite gene expression. Required for aflR expression and subsequent aflatoxin production. Negatively regulates veA expression. Controls conidiophore and conidial development. Required for hydrophobin production which plays a role in cell surface hydrophobicity and host defense escape. This is Secondary metabolism regulator laeA from Aspergillus flavus (strain ATCC 200026 / FGSC A1120 / IAM 13836 / NRRL 3357 / JCM 12722 / SRRC 167).